We begin with the raw amino-acid sequence, 91 residues long: Acylphosphatase (91 aa).

In terms of domain architecture, Acylphosphatase-like spans 3 to 91 (CLRAIVKGKV…ANYSDFRIKH (89 aa)). Active-site residues include R18 and N36.

Belongs to the acylphosphatase family.

It catalyses the reaction an acyl phosphate + H2O = a carboxylate + phosphate + H(+). The protein is Acylphosphatase (acyP) of Dehalococcoides mccartyi (strain CBDB1).